We begin with the raw amino-acid sequence, 827 residues long: N-terminal kinase-like protein (827 aa).

The 309-residue stretch at 1 to 309 folds into the Protein kinase domain; it reads MWFWSRDPAR…PEDFCRHKIL (309 aa). 3 HEAT repeats span residues 345–383, 384–422, and 502–540; these read IIPVVVKMFSSTDRAMRIRLLQQMENFIQYLNEPTVNAQ, IFPHVVHGFMDTNPAIREQTVKSMLLLAPKLNENNLNME, and VLPVLCGVTVDPEKNVREQAFKAIRSFLDKLETVSEDPS. Residues 586 to 624 are compositionally biased toward low complexity; sequence DAAASEGASAPSTASEASKPDTAPSSSAPPAAASTAPTS. Residues 586–827 form a disordered region; sequence DAAASEGASA…PLKLGVRKLD (242 aa). The segment covering 630–640 has biased composition (basic and acidic residues); that stretch reads EKGAPDNSLDR. Positions 641 to 652 are enriched in acidic residues; that stretch reads WDDEDWGSLEDA. Positions 667–678 are enriched in basic and acidic residues; it reads DWGHGKTQEKTV. 2 stretches are compositionally biased toward polar residues: residues 679–690 and 737–746; these read DFSSSRSKTKQV and NWDTSGSSGR. Residues 774 to 783 are compositionally biased toward acidic residues; sequence GGDDNWESVE. Residues 788-817 adopt a coiled-coil conformation; the sequence is LSKAEMARKKREERQKEIEAKRAERRAAKG. Residues 792–814 are compositionally biased toward basic and acidic residues; that stretch reads EMARKKREERQKEIEAKRAERRA.

Belongs to the protein kinase superfamily.

Regulates COPI-mediated retrograde protein traffic at the interface between the Golgi apparatus and the endoplasmic reticulum. Involved in the maintenance of the Golgi apparatus morphology. The chain is N-terminal kinase-like protein (scyl1) from Xenopus tropicalis (Western clawed frog).